The primary structure comprises 302 residues: Zinc transporter ZIP1 (302 aa).

Over 1-6 the chain is Extracellular; sequence MEYLLQ. Residues 7 to 27 form a helical membrane-spanning segment; the sequence is VKIAALVGLLFLTLIFGFIPA. Residues 28–44 are Cytoplasmic-facing; sequence RVKWFRDTDGTETHRTV. The helical transmembrane segment at 45 to 65 threads the bilayer; the sequence is LSLISCFAGGVFLSACFLDII. Over 66–80 the chain is Extracellular; sequence PDYLSDINTELHARQ. The helical transmembrane segment at 81 to 101 threads the bilayer; that stretch reads LETSFPLPEFIMAAGFFTVLI. Topologically, residues 102–158 are cytoplasmic; sequence LERIVLNCKEMRATHEERTTLIPERKSGHGHGHGDGPDPESSGHHVHVDFQAHSPFR. Positions 123-145 are disordered; that stretch reads IPERKSGHGHGHGDGPDPESSGH. Residues 159 to 179 traverse the membrane as a helical segment; sequence SFMLFLSLSLHSIFEGLAIGL. Residues 180-185 are Extracellular-facing; that stretch reads QTTDPK. The chain crosses the membrane as a helical span at residues 186-206; that stretch reads VVEICIAILVHKSIIVFSLAV. At 207-216 the chain is on the cytoplasmic side; it reads KLVQSAIPPL. Residues 217–237 form a helical membrane-spanning segment; it reads WVAAYIGVFALMSPVGIAIGI. Residues 238 to 251 lie on the Extracellular side of the membrane; it reads SVMEAQLAAGPLIQ. The helical transmembrane segment at 252-272 threads the bilayer; sequence AILEGFAAGTFVYITFLEILP. Topologically, residues 273–281 are cytoplasmic; it reads HELNSPGKQ. The chain crosses the membrane as a helical span at residues 282–302; it reads LLKVLFLLLGFSIMAALSFLG.

Belongs to the ZIP transporter (TC 2.A.5) family. As to expression, highest levels in ovary, lower levels in intestine and gill, barely detected in kidney.

The protein localises to the cell membrane. It localises to the endoplasmic reticulum membrane. It catalyses the reaction Zn(2+)(in) = Zn(2+)(out). Functionally, transporter for the divalent cation Zn(2+). Mediates the influx of Zn(2+) into cells from extracellular space. In Takifugu rubripes (Japanese pufferfish), this protein is Zinc transporter ZIP1 (slc39a1).